Consider the following 710-residue polypeptide: DNA ligase (710 aa).

Residues 1 to 36 form a disordered region; it reads MTSSSPRHADPDENPYVEAPPTDFEPVGALSEDEAT. Residues 63-67, 111-112, and Glu-147 contribute to the NAD(+) site; these read DETYD and SI. The active-site N6-AMP-lysine intermediate is Lys-149. NAD(+) contacts are provided by Arg-170, Glu-206, and Lys-353. The Zn(2+) site is built by Cys-444, Cys-447, Cys-460, and Cys-466. The 88-residue stretch at 623-710 folds into the BRCT domain; that stretch reads ETGDALDGLT…ERGVAWPPEE (88 aa). The segment at 657-689 is disordered; the sequence is ATSSVSGNTDYLVAGESPGRSKRDDADAEGVPV.

The protein belongs to the NAD-dependent DNA ligase family. LigA subfamily. Mg(2+) is required as a cofactor. Requires Mn(2+) as cofactor.

It catalyses the reaction NAD(+) + (deoxyribonucleotide)n-3'-hydroxyl + 5'-phospho-(deoxyribonucleotide)m = (deoxyribonucleotide)n+m + AMP + beta-nicotinamide D-nucleotide.. In terms of biological role, DNA ligase that catalyzes the formation of phosphodiester linkages between 5'-phosphoryl and 3'-hydroxyl groups in double-stranded DNA using NAD as a coenzyme and as the energy source for the reaction. It is essential for DNA replication and repair of damaged DNA. The sequence is that of DNA ligase from Halorubrum lacusprofundi (strain ATCC 49239 / DSM 5036 / JCM 8891 / ACAM 34).